The sequence spans 410 residues: Gamma-glutamyl phosphate reductase (410 aa).

It belongs to the gamma-glutamyl phosphate reductase family.

It is found in the cytoplasm. It catalyses the reaction L-glutamate 5-semialdehyde + phosphate + NADP(+) = L-glutamyl 5-phosphate + NADPH + H(+). The protein operates within amino-acid biosynthesis; L-proline biosynthesis; L-glutamate 5-semialdehyde from L-glutamate: step 2/2. Functionally, catalyzes the NADPH-dependent reduction of L-glutamate 5-phosphate into L-glutamate 5-semialdehyde and phosphate. The product spontaneously undergoes cyclization to form 1-pyrroline-5-carboxylate. This is Gamma-glutamyl phosphate reductase from Campylobacter jejuni subsp. jejuni serotype O:23/36 (strain 81-176).